The primary structure comprises 843 residues: Translation initiation factor IF-2 (843 aa).

2 disordered regions span residues 50–72 (LKSS…KTTS) and 94–260 (QRSP…TGPV). Residues 96 to 135 (SPEEIQAEQKREQDERRAAENAARDKVDADVRQRNEEQAR) are compositionally biased toward basic and acidic residues. Residues 139-173 (TATAAAAPAAKAEPAPAAAAPAPAPVVADAPASED) are compositionally biased toward low complexity. 2 stretches are compositionally biased toward basic and acidic residues: residues 174–203 (AAAR…RGEA) and 227–236 (TTDEESDGAR). Over residues 237–250 (RGRGGKGKLKKRNQ) the composition is skewed to basic residues. Residues 343–516 (SRAPVVTVMG…EVLELTATPT (174 aa)) enclose the tr-type G domain. The interval 352–359 (GHVDHGKT) is G1. A GTP-binding site is contributed by 352 to 359 (GHVDHGKT). The G2 stretch occupies residues 377 to 381 (GITQH). Residues 398 to 401 (DTPG) are G3. GTP contacts are provided by residues 398 to 402 (DTPGH) and 452 to 455 (NKID). A G4 region spans residues 452–455 (NKID). A G5 region spans residues 488–490 (SAK).

This sequence belongs to the TRAFAC class translation factor GTPase superfamily. Classic translation factor GTPase family. IF-2 subfamily.

The protein resides in the cytoplasm. One of the essential components for the initiation of protein synthesis. Protects formylmethionyl-tRNA from spontaneous hydrolysis and promotes its binding to the 30S ribosomal subunits. Also involved in the hydrolysis of GTP during the formation of the 70S ribosomal complex. The polypeptide is Translation initiation factor IF-2 (Pseudomonas putida (strain W619)).